The chain runs to 61 residues: Large ribosomal subunit protein bL28 (61 aa).

The protein belongs to the bacterial ribosomal protein bL28 family.

The protein is Large ribosomal subunit protein bL28 (rpmB) of Geobacillus stearothermophilus (Bacillus stearothermophilus).